The sequence spans 668 residues: CLK4-associating serine/arginine rich protein (668 aa).

At serine 101 the chain carries Phosphoserine. 2 disordered regions span residues 173–232 and 252–668; these read AEVE…GMAD and AKAL…HYRH. Over residues 182–214 the composition is skewed to acidic residues; sequence PEEEESPAEEESNSDEDEVIPDIDVEVDVDELN. Positions 265–283 are enriched in basic residues; the sequence is RRSRRQRREFREKRLRGRK. 2 positions are modified to phosphoserine: serine 285 and serine 294. Over residues 290 to 313 the composition is skewed to basic and acidic residues; that stretch reads ARRDSPTYDPYKRSPSESSSESRS. Residue threonine 327 is modified to Phosphothreonine. 2 positions are modified to phosphoserine: serine 331 and serine 335. Residues 340 to 353 show a composition bias toward low complexity; it reads AAAAAAAAASGAAP. Residues 354-365 are compositionally biased toward pro residues; that stretch reads GKPPAPPQPGGP. Low complexity predominate over residues 378–395; the sequence is SSSSASRTSSSRSSSRSS. Basic residues predominate over residues 396-435; the sequence is SRSRRGYYRSGRHARSRSRSWSRSRSRSRRYSRSRSRGRR. Residues 436-446 show a composition bias toward basic and acidic residues; it reads HSDGGSRDGHR. Positions 475 to 486 are enriched in basic residues; that stretch reads RGARGPRHHSSS. 2 stretches are compositionally biased toward low complexity: residues 487 to 510 and 518 to 527; these read HSRSSWSLSPSRSRSLTRSGSRSQ and QSHSQSQSHS. At serine 541 the chain carries Phosphoserine. Threonine 567 is modified (phosphothreonine). Residues 579-641 adopt a coiled-coil conformation; it reads ALNRQFKADK…ERQYSRQSRS (63 aa). 2 stretches are compositionally biased toward basic and acidic residues: residues 584–611 and 619–635; these read FKADKKAAQEKMIQQEHERQEREDELRA and KERERREKEREEWERQY. The span at 636 to 645 shows a compositional bias: low complexity; the sequence is SRQSRSPSPR. The segment covering 653–668 has biased composition (basic residues); it reads SRRRSRSRSRSPHYRH.

The protein belongs to the splicing factor SR family. Probably interacts with CLK4. Post-translationally, phosphorylated in vitro by CLK4.

It is found in the nucleus. Probably functions as an alternative splicing regulator. May regulate the mRNA splicing of genes such as CLK1. May act by regulating members of the CLK kinase family. The chain is CLK4-associating serine/arginine rich protein (Clasrp) from Rattus norvegicus (Rat).